The chain runs to 503 residues: 2-isopropylmalate synthase (503 aa).

Mn(2+) contacts are provided by Asp-1, His-189, His-191, and Asn-225. A Pyruvate carboxyltransferase domain is found at 1 to 254 (DGEQALQASL…STNINHKEIY (254 aa)). The regulatory domain stretch occupies residues 379-503 (SLKFFSVQSI…NKNLKNLKKQ (125 aa)).

Belongs to the alpha-IPM synthase/homocitrate synthase family. LeuA type 1 subfamily. In terms of assembly, homodimer. The cofactor is Mn(2+).

The protein localises to the cytoplasm. It catalyses the reaction 3-methyl-2-oxobutanoate + acetyl-CoA + H2O = (2S)-2-isopropylmalate + CoA + H(+). It participates in amino-acid biosynthesis; L-leucine biosynthesis; L-leucine from 3-methyl-2-oxobutanoate: step 1/4. In terms of biological role, catalyzes the condensation of the acetyl group of acetyl-CoA with 3-methyl-2-oxobutanoate (2-ketoisovalerate) to form 3-carboxy-3-hydroxy-4-methylpentanoate (2-isopropylmalate). The protein is 2-isopropylmalate synthase of Buchnera aphidicola subsp. Uroleucon ambrosiae.